The following is a 304-amino-acid chain: MVVLDQPAQSGMVVALQANYLEVELDQVSELIPSRLLCTRRTRLSHRGEAVYVGDRVRVEAIDVSHARAVVADVEPRVSFLTRPPVANASTVVVALAVDQPAFDPDQASRFLLTAERTSLAVQLVLTKTDLLEPEALERLRVRLQAWGYPPLLVSTFSGLGLSELKQRLAESSLSVLCGPSGVGKSSLLNALIPELDLRIGSVSGRLQRGRHTTRHVELHHLGAKARVADTPGFNRPDLPDDPRNLEVLFPELRVQLEQHPCRFRDCLHRDEPGCGVTRDWERYPIYRRAVEDLLGLSRPSRGG.

In terms of domain architecture, CP-type G spans 78–237; sequence VSFLTRPPVA…VADTPGFNRP (160 aa). GTP-binding positions include 127 to 130 and 179 to 187; these read TKTD and GPSGVGKSS. Cys262, Cys267, His269, and Cys275 together coordinate Zn(2+).

The protein belongs to the TRAFAC class YlqF/YawG GTPase family. RsgA subfamily. As to quaternary structure, monomer. Associates with 30S ribosomal subunit, binds 16S rRNA. Zn(2+) serves as cofactor.

It is found in the cytoplasm. One of several proteins that assist in the late maturation steps of the functional core of the 30S ribosomal subunit. Helps release RbfA from mature subunits. May play a role in the assembly of ribosomal proteins into the subunit. Circularly permuted GTPase that catalyzes slow GTP hydrolysis, GTPase activity is stimulated by the 30S ribosomal subunit. The polypeptide is Small ribosomal subunit biogenesis GTPase RsgA (Synechococcus sp. (strain CC9311)).